We begin with the raw amino-acid sequence, 293 residues long: tRNA pseudouridine synthase B (293 aa).

The active-site Nucleophile is the Asp-39.

Belongs to the pseudouridine synthase TruB family. Type 1 subfamily.

The enzyme catalyses uridine(55) in tRNA = pseudouridine(55) in tRNA. Functionally, responsible for synthesis of pseudouridine from uracil-55 in the psi GC loop of transfer RNAs. This Thermobifida fusca (strain YX) protein is tRNA pseudouridine synthase B.